We begin with the raw amino-acid sequence, 470 residues long: Alpha-galactosidase (470 aa).

The N-terminal stretch at 1–18 (MFSLLLLTSTALVETALG) is a signal peptide. Cysteines 42 and 74 form a disulfide. Residue asparagine 43 is glycosylated (N-linked (GlcNAc...) asparagine). Substrate contacts are provided by aspartate 72 and aspartate 73. A glycan (N-linked (GlcNAc...) asparagine) is linked at asparagine 82. Cysteine 121 and cysteine 151 are joined by a disulfide. Substrate is bound at residue lysine 147. Aspartate 149 (nucleophile) is an active-site residue. N-linked (GlcNAc...) asparagine glycosylation occurs at asparagine 175. Arginine 205 lines the substrate pocket. Aspartate 209 (proton donor) is an active-site residue. 2 disulfides stabilise this stretch: cysteine 221–cysteine 237 and cysteine 223–cysteine 230. Glutamine 251 lines the substrate pocket. Asparagine 270, asparagine 388, asparagine 413, asparagine 422, asparagine 435, and asparagine 454 each carry an N-linked (GlcNAc...) asparagine glycan.

This sequence belongs to the glycosyl hydrolase 27 family. Homotetramer.

The protein localises to the secreted. It catalyses the reaction Hydrolysis of terminal, non-reducing alpha-D-galactose residues in alpha-D-galactosides, including galactose oligosaccharides, galactomannans and galactolipids.. The chain is Alpha-galactosidase (MEL) from Zygotorulaspora mrakii (Zygosaccharomyces mrakii).